We begin with the raw amino-acid sequence, 446 residues long: MFKAMLSSIVMRTMQKKINAQTITEKDVELVLKEIRIALLDADVNLLVVKNFIKAIRDKTVGQTIEPGQDLQKSLLKTIKTELINILSQPNQELNEKRPLKIMMVGLQGSGKTTTCGKLAYWLEKKYKQKTMLVGLDIYRPAAIEQLETLSQQTNSVFFAQGTQPVAKTTKAALSAFKTAKCQTIICDTAGRLQTNETLMDELVSVKNELNPDEIIMVVDGLSGQEIINVAQTFHKRLKLTGFIISKLDSDARAGAALSLASLLQVPIKLIGVSEKLDGLEQFHPERIANRILGLGDVMSLVEKAEQVFDKKDLTKTISKMFLGKMDLEDLLIYMQQMHKMGSVSSLIKMLPANFSVSEENAELIENKIELWKVLINSMTREERRHPKLINRDPNRKQRIIKGSGRKMDELNKLMKEWNKMQLKATEMGKLLKTGSNPFGGFGQFF.

GTP-binding positions include 106 to 113 (GLQGSGKT), 188 to 192 (DTAGR), and 246 to 249 (SKLD).

The protein belongs to the GTP-binding SRP family. SRP54 subfamily. As to quaternary structure, part of the signal recognition particle protein translocation system, which is composed of SRP and FtsY.

The protein resides in the cytoplasm. The enzyme catalyses GTP + H2O = GDP + phosphate + H(+). Functionally, involved in targeting and insertion of nascent membrane proteins into the cytoplasmic membrane. Binds to the hydrophobic signal sequence of the ribosome-nascent chain (RNC) as it emerges from the ribosomes. The SRP-RNC complex is then targeted to the cytoplasmic membrane where it interacts with the SRP receptor FtsY. The sequence is that of Signal recognition particle protein from Mycoplasma genitalium (strain ATCC 33530 / DSM 19775 / NCTC 10195 / G37) (Mycoplasmoides genitalium).